The following is a 238-amino-acid chain: Ribosomal RNA small subunit methyltransferase G (238 aa).

Residues G77, F82, A128 to E129, and R147 each bind S-adenosyl-L-methionine.

This sequence belongs to the methyltransferase superfamily. RNA methyltransferase RsmG family.

It localises to the cytoplasm. Functionally, specifically methylates the N7 position of guanine in position 535 of 16S rRNA. This is Ribosomal RNA small subunit methyltransferase G from Listeria welshimeri serovar 6b (strain ATCC 35897 / DSM 20650 / CCUG 15529 / CIP 8149 / NCTC 11857 / SLCC 5334 / V8).